The sequence spans 670 residues: MAEVVAEVAEMPTQMSPGAVEMSTPMSAEMMEMSTEVTEMTPGEALASSLFFQHHQFMCSECGSLYNTLEEVLSHQEQHMLAVSEEEALTTQNVGLEPELVPGAEGPFQCGECSQLILSPGELLAHQDAHLRESANQIQYQCWDCQELFPSPELWVAHRKAQHLSATVAEPPVPPPLPPPTPLPPPSPPSEVKMEPYECPECSTLCATPEEFLEHQGTHFDSLEKEERNGLEEEEEDDEEDEEDDEEMEDEEAMAEVGDDAVGGDESTAGWAQGCGDCPQHQPSAGARRQHRRTAHSPASATHPFHCSQCQRSFSSANRLQAHGRAHVGGTHECTTCSKVFKKAASLEQHLRLHRGEARYLCVDCGRGFGTELTLVAHRRAHTANPLHRCRCGKTFSNMTKFLYHRRTHAGKSGAPPTGATAPPAPAEPTPPPPPPAPPAQLPCPQCSKSFASASRLSRHRRAVHGPPERRHRCGVCGKGFKKLIHVRNHLRTHTGERPFQCHSCGKTFASLANLSRHQLTHTGARPYQCLDCGKRFTQSSNLQQHRRLHLRPVAFARAPRLPITGLYNKSPYYCGTCGRWFRAMAGLRLHQRVHARARTLTLQPPRSPSPAPPPPPEPQQTIMCTELGETIAIIETSQPLALEDTLQLCQAALGASEAGGLLQLDTAFV.

3 consecutive C2H2-type zinc fingers follow at residues 57–79 (FMCSECGSLYNTLEEVLSHQEQH), 108–130 (FQCGECSQLILSPGELLAHQDAH), and 140–163 (YQCWDCQELFPSPELWVAHRKAQH). Disordered stretches follow at residues 168–196 (VAEPPVPPPLPPPTPLPPPSPPSEVKMEP) and 217–304 (GTHF…ATHP). The span at 171-189 (PPVPPPLPPPTPLPPPSPP) shows a compositional bias: pro residues. The C2H2-type 4 zinc finger occupies 197 to 219 (YECPECSTLCATPEEFLEHQGTH). A compositionally biased stretch (basic and acidic residues) spans 217 to 231 (GTHFDSLEKEERNGL). Acidic residues predominate over residues 232-263 (EEEEEDDEEDEEDDEEMEDEEAMAEVGDDAVG). 9 C2H2-type zinc fingers span residues 305 to 327 (FHCSQCQRSFSSANRLQAHGRAH), 332 to 354 (HECTTCSKVFKKAASLEQHLRLH), 360 to 382 (YLCVDCGRGFGTELTLVAHRRAH), 388 to 409 (HRCRCGKTFSNMTKFLYHRRTH), 442 to 465 (LPCPQCSKSFASASRLSRHRRAVH), 472 to 494 (HRCGVCGKGFKKLIHVRNHLRTH), 500 to 522 (FQCHSCGKTFASLANLSRHQLTH), 528 to 550 (YQCLDCGKRFTQSSNLQQHRRLH), and 573 to 595 (YYCGTCGRWFRAMAGLRLHQRVH). Positions 409–443 (HAGKSGAPPTGATAPPAPAEPTPPPPPPAPPAQLP) are disordered. Residues 423-442 (PPAPAEPTPPPPPPAPPAQL) are compositionally biased toward pro residues. A disordered region spans residues 601–621 (LTLQPPRSPSPAPPPPPEPQQ). Positions 606 to 619 (PRSPSPAPPPPPEP) are enriched in pro residues.

Belongs to the krueppel C2H2-type zinc-finger protein family. Widely expressed.

Its subcellular location is the nucleus. In terms of biological role, may be involved in transcriptional regulation. This chain is Zinc finger protein 526 (ZNF526), found in Homo sapiens (Human).